The chain runs to 592 residues: MRSHYCGDVNKSHVGQEVTLVGWVNRSRDLGGVVFLDLRDREGLIQVVYDPDLPEVFNVASTLRAEFCVQVKGLVRARPDSQVNGQMKTGEIEVLGQALTIINAADPLPLSMDNYQNNSEEQRLKYRYLDLRRPEMAQRLIFRAKVTSSVRRFLDSNGFLDIETPILTKATPEGARDYLVPSRTYKGQFFALPQSPQLFKQLLMMSGFDRYYQIVKCFRDEDLRADRQPEFTQIDIETSFMSSEQVMAKTEEMMRGLFLEMLNVDLGEFPRMTYNEAMRRFGSDKPDLRNPLELVDIADLLKEVEFAVFSGPANDEEGRVAALRIPGGAALSRKQIDDYTKFVGIYGAKGLAWMKINDLSLGLEGIQSPVLKFLNESIVNEIVSRTGAQTGDIILFGADQATVVAESMGALRLKAGEDFNLLQGEWRPLWVVDFPMFEKINGNFHAVHHPFTAPRGVTAAELEANPANRVSDAYDMVLNGCELGGGSVRIHNQEMQSAVFRILGITDEEAKEKFGFLLEALRYGTPPHAGLAFGLDRIIMLMTGASSIRDVMAFPKTTTAACPLTNAPGFANPQQLAELGIAVVEKAVKTED.

Glu-173 lines the L-aspartate pocket. The interval 197–200 (QLFK) is aspartate. Position 219 (Arg-219) interacts with L-aspartate. ATP contacts are provided by residues 219–221 (RDE) and Gln-228. His-448 serves as a coordination point for L-aspartate. Glu-482 contacts ATP. Arg-489 provides a ligand contact to L-aspartate. Residue 534-537 (GLDR) coordinates ATP.

This sequence belongs to the class-II aminoacyl-tRNA synthetase family. Type 1 subfamily. As to quaternary structure, homodimer.

The protein resides in the cytoplasm. It catalyses the reaction tRNA(Asp) + L-aspartate + ATP = L-aspartyl-tRNA(Asp) + AMP + diphosphate. Functionally, catalyzes the attachment of L-aspartate to tRNA(Asp) in a two-step reaction: L-aspartate is first activated by ATP to form Asp-AMP and then transferred to the acceptor end of tRNA(Asp). The sequence is that of Aspartate--tRNA ligase from Shewanella baltica (strain OS223).